Consider the following 461-residue polypeptide: Photosystem II CP43 reaction center protein (461 aa).

Residues 1-2 (ME) constitute a propeptide that is removed on maturation. Thr3 carries the N-acetylthreonine modification. Thr3 carries the post-translational modification Phosphothreonine. The next 5 membrane-spanning stretches (helical) occupy residues 57 to 81 (LFEVAHFVPEKPMYEQGLILLPHLA), 122 to 143 (LLGPETLEESFPFFGYVWKDRN), 166 to 188 (KALYFGGVYDTWAPGGGDVRKIT), 243 to 263 (KPFAWARRALVWSGEAYLSYS), and 279 to 300 (WFNNTAYPSEFYGPTGPEASQA). Glu355 lines the [CaMn4O5] cluster pocket. Residues 435-459 (RARAAAAGFEKGIDRDFEPVLSMTP) traverse the membrane as a helical segment.

It belongs to the PsbB/PsbC family. PsbC subfamily. PSII is composed of 1 copy each of membrane proteins PsbA, PsbB, PsbC, PsbD, PsbE, PsbF, PsbH, PsbI, PsbJ, PsbK, PsbL, PsbM, PsbT, PsbX, PsbY, PsbZ, Psb30/Ycf12, at least 3 peripheral proteins of the oxygen-evolving complex and a large number of cofactors. It forms dimeric complexes. Binds multiple chlorophylls and provides some of the ligands for the Ca-4Mn-5O cluster of the oxygen-evolving complex. It may also provide a ligand for a Cl- that is required for oxygen evolution. PSII binds additional chlorophylls, carotenoids and specific lipids. is required as a cofactor.

It is found in the plastid. The protein resides in the chloroplast thylakoid membrane. Its function is as follows. One of the components of the core complex of photosystem II (PSII). It binds chlorophyll and helps catalyze the primary light-induced photochemical processes of PSII. PSII is a light-driven water:plastoquinone oxidoreductase, using light energy to abstract electrons from H(2)O, generating O(2) and a proton gradient subsequently used for ATP formation. This chain is Photosystem II CP43 reaction center protein, found in Nicotiana sylvestris (Wood tobacco).